The primary structure comprises 498 residues: Angiopoietin-1 (498 aa).

The signal sequence occupies residues 1–15 (MTVFLSFAFLAAILT). Positions 81-119 (QKLQHLEHVMENYTQWLQKLENYIVENMKSEMAQIQQNA) form a coiled coil. Asn-92, Asn-122, Asn-154, Asn-243, and Asn-295 each carry an N-linked (GlcNAc...) asparagine glycan. The stretch at 153–261 (LNQTSRLEIQ…LELMDTVHNL (109 aa)) forms a coiled coil. A Fibrinogen C-terminal domain is found at 277-497 (REEEKPFRDC…STTMMIRPLD (221 aa)). Intrachain disulfides connect Cys-286–Cys-315 and Cys-439–Cys-452.

As to quaternary structure, homooligomer. Interacts with TEK/TIE2. Interacts with SVEP1/polydom. Interacts with THBD; this interaction significantly inhibits the generation of activated PC and TAFIa/CPB2 by the thrombin/thrombomodulin complex. Post-translationally, glycosylated.

It is found in the secreted. Its function is as follows. Binds and activates TEK/TIE2 receptor by inducing its dimerization and tyrosine phosphorylation. Plays an important role in the regulation of angiogenesis, endothelial cell survival, proliferation, migration, adhesion and cell spreading, reorganization of the actin cytoskeleton, but also maintenance of vascular quiescence. Required for normal angiogenesis and heart development during embryogenesis. After birth, activates or inhibits angiogenesis, depending on the context. Inhibits angiogenesis and promotes vascular stability in quiescent vessels, where endothelial cells have tight contacts. In quiescent vessels, ANGPT1 oligomers recruit TEK to cell-cell contacts, forming complexes with TEK molecules from adjoining cells, and this leads to preferential activation of phosphatidylinositol 3-kinase and the AKT1 signaling cascades. In migrating endothelial cells that lack cell-cell adhesions, ANGT1 recruits TEK to contacts with the extracellular matrix, leading to the formation of focal adhesion complexes, activation of PTK2/FAK and of the downstream kinases MAPK1/ERK2 and MAPK3/ERK1, and ultimately to the stimulation of sprouting angiogenesis. Mediates blood vessel maturation/stability. Implicated in endothelial developmental processes later and distinct from that of VEGF. Appears to play a crucial role in mediating reciprocal interactions between the endothelium and surrounding matrix and mesenchyme. This Homo sapiens (Human) protein is Angiopoietin-1 (ANGPT1).